Reading from the N-terminus, the 262-residue chain is Thiazole synthase (262 aa).

Lysine 98 serves as the catalytic Schiff-base intermediate with DXP. 1-deoxy-D-xylulose 5-phosphate is bound by residues glycine 159, 186-187, and 208-209; these read AG and NT.

This sequence belongs to the ThiG family. Homotetramer. Forms heterodimers with either ThiH or ThiS.

The protein localises to the cytoplasm. The enzyme catalyses [ThiS sulfur-carrier protein]-C-terminal-Gly-aminoethanethioate + 2-iminoacetate + 1-deoxy-D-xylulose 5-phosphate = [ThiS sulfur-carrier protein]-C-terminal Gly-Gly + 2-[(2R,5Z)-2-carboxy-4-methylthiazol-5(2H)-ylidene]ethyl phosphate + 2 H2O + H(+). It participates in cofactor biosynthesis; thiamine diphosphate biosynthesis. Catalyzes the rearrangement of 1-deoxy-D-xylulose 5-phosphate (DXP) to produce the thiazole phosphate moiety of thiamine. Sulfur is provided by the thiocarboxylate moiety of the carrier protein ThiS. In vitro, sulfur can be provided by H(2)S. The polypeptide is Thiazole synthase (Hahella chejuensis (strain KCTC 2396)).